Reading from the N-terminus, the 98-residue chain is MPSISTNIILAFTTALLGVLIYRSHLMSSLLCLEGMMLSMFILVSLTTLNLHFSLATVTPIILLVFAACEAAVGLALLVMVSNTYGMDYIQNLNLLQC.

The next 3 membrane-spanning stretches (helical) occupy residues 1–21 (MPSI…GVLI), 26–46 (LMSS…LVSL), and 61–81 (IILL…LVMV).

It belongs to the complex I subunit 4L family. Core subunit of respiratory chain NADH dehydrogenase (Complex I) which is composed of 45 different subunits.

It is found in the mitochondrion inner membrane. The enzyme catalyses a ubiquinone + NADH + 5 H(+)(in) = a ubiquinol + NAD(+) + 4 H(+)(out). Functionally, core subunit of the mitochondrial membrane respiratory chain NADH dehydrogenase (Complex I) which catalyzes electron transfer from NADH through the respiratory chain, using ubiquinone as an electron acceptor. Part of the enzyme membrane arm which is embedded in the lipid bilayer and involved in proton translocation. In Galago senegalensis (Northern lesser bushbaby), this protein is NADH-ubiquinone oxidoreductase chain 4L (MT-ND4L).